We begin with the raw amino-acid sequence, 436 residues long: Histidinol dehydrogenase (436 aa).

Substrate is bound by residues Ser237, Gln259, and His262. Residues Gln259 and His262 each coordinate Zn(2+). Residues Glu327 and His328 each act as proton acceptor in the active site. The substrate site is built by His328, Asp361, Glu415, and His420. Position 361 (Asp361) interacts with Zn(2+). Residue His420 participates in Zn(2+) binding.

Belongs to the histidinol dehydrogenase family. It depends on Zn(2+) as a cofactor.

The enzyme catalyses L-histidinol + 2 NAD(+) + H2O = L-histidine + 2 NADH + 3 H(+). It functions in the pathway amino-acid biosynthesis; L-histidine biosynthesis; L-histidine from 5-phospho-alpha-D-ribose 1-diphosphate: step 9/9. Catalyzes the sequential NAD-dependent oxidations of L-histidinol to L-histidinaldehyde and then to L-histidine. This is Histidinol dehydrogenase from Helicobacter hepaticus (strain ATCC 51449 / 3B1).